A 439-amino-acid polypeptide reads, in one-letter code: Probable RNA-binding protein 23 (439 aa).

Residues 13–159 are disordered; it reads MLEAPYKKEE…PVREPVDNLS (147 aa). The span at 17–34 shows a compositional bias: basic and acidic residues; that stretch reads PYKKEEDEQQRKEVKKDY. The segment covering 36–57 has biased composition (low complexity); the sequence is SNTTSSTSNSGNETSGSSTIGE. The segment covering 60-90 has biased composition (basic residues); it reads KKKRSRSHNKSRDRKRSRSRDRDRYRRRNSR. The segment covering 103–125 has biased composition (basic and acidic residues); the sequence is RSWDRRHGSESRSRDHRREDRVH. 2 positions are modified to phosphoserine: Ser-128 and Ser-149. Positions 144–159 are enriched in basic and acidic residues; sequence HFREKSPVREPVDNLS. 2 consecutive RRM domains span residues 166-243 and 263-341; these read RTVF…ASQA and MRLY…HVTE.

The protein belongs to the splicing factor SR family. Post-translationally, aryl sulfonamide anticancer drugs, such as indisulam (E7070) or E7820, promote ubiquitination and subsequent degradation by the DCX(DCAF15) complex. Aryl sulfonamide anticancer drugs change the substrate specificity of DCAF15 by acting as a molecular glue that promotes binding between DCAF15 and weak affinity interactor RBM23. Highly expressed in placenta, liver, skeletal muscle, heart and kidney. Expressed at lower levels in the colon, thymus, spleen, small intestine and lung.

It localises to the nucleus. Functionally, RNA-binding protein that acts both as a transcription coactivator and pre-mRNA splicing factor. Regulates steroid hormone receptor-mediated transcription, independently of the pre-mRNA splicing factor activity. The protein is Probable RNA-binding protein 23 of Homo sapiens (Human).